A 1168-amino-acid chain; its full sequence is TBC1 domain family member 1 (1168 aa).

Position 146 is a phosphoserine (Ser-146). Positions 203–238 (VSGSRGSESPRPNPPHAAPTGSQEPVRRPMRKSFSQ) are disordered. Ser-235 is subject to Phosphoserine; by PKB/AKT1. Ser-237 carries the post-translational modification Phosphoserine. A PID domain is found at 246–404 (FRKELQDGGL…LHKLCERIEG (159 aa)). Phosphoserine is present on Ser-503. At Thr-505 the chain carries Phosphothreonine; by PKB/AKT1. Ser-507, Ser-525, and Ser-527 each carry phosphoserine. Low complexity predominate over residues 532–542 (SSLSSTLSNTS). Disordered regions lie at residues 532–551 (SSLSSTLSNTSKEPSVCEKE) and 564–587 (GSSEDLSSDSESHLPEEPAPLSPQ). Phosphoserine is present on residues Ser-565, Ser-566, Ser-570, Ser-571, and Ser-585. Thr-596 is subject to Phosphothreonine. Ser-614 is modified (phosphoserine). At Ser-627 the chain carries Phosphoserine; by PKB/AKT1. Disordered stretches follow at residues 628–658 (VSTETPHERKDFESKANHLGDSGGTPVKTRR) and 678–717 (SSSRYEDYSELGELPPRSPLEPVCEDGPFGPPPEEKKRTS). Over residues 632–645 (TPHERKDFESKANH) the composition is skewed to basic and acidic residues. 2 positions are modified to phosphoserine: Ser-695 and Ser-941. The Rab-GAP TBC domain occupies 800–994 (GVPRHHRGEI…RVFDMIFLQG (195 aa)). At Tyr-952 the chain carries Phosphotyrosine. Position 1131 is a phosphothreonine (Thr-1131). Basic and acidic residues predominate over residues 1145-1159 (ELRRRSAEPSDREPE). Residues 1145 to 1168 (ELRRRSAEPSDREPECTQPEPTGD) form a disordered region.

In terms of assembly, interacts with APPL2 (via BAR domain); interaction is dependent of TBC1D1 phosphorylation at Ser-235; interaction diminishes the phosphorylation of TBC1D1 at Thr-596, resulting in inhibition of SLC2A4/GLUT4 translocation and glucose uptake. Post-translationally, insulin-stimulated phosphorylation by AKT family kinases stimulates SLC2A4/GLUT4 translocation.

Its subcellular location is the nucleus. Its function is as follows. May act as a GTPase-activating protein for Rab family protein(s). May play a role in the cell cycle and differentiation of various tissues. Involved in the trafficking and translocation of GLUT4-containing vesicles and insulin-stimulated glucose uptake into cells. The sequence is that of TBC1 domain family member 1 (TBC1D1) from Homo sapiens (Human).